Here is a 184-residue protein sequence, read N- to C-terminus: Putative YfeABCD regulator YfeE (184 aa).

The next 3 membrane-spanning stretches (helical) occupy residues 15–35, 84–104, and 162–182; these read IAGW…IINF, LSAG…GLSL, and ILPS…GIMI.

It to E.coli YniB.

It localises to the cell membrane. Functionally, putative regulator of YfeABCD, an ABC transporter locus involved in inorganic iron transport. This chain is Putative YfeABCD regulator YfeE (yfeE), found in Yersinia pestis.